We begin with the raw amino-acid sequence, 381 residues long: Queuine tRNA-ribosyltransferase (381 aa).

The active-site Proton acceptor is the aspartate 92. Substrate-binding positions include 92 to 96 (DSGGF), aspartate 146, glutamine 190, and glycine 217. The segment at 248-254 (GVGRPED) is RNA binding. The active-site Nucleophile is the aspartate 267. The tract at residues 272–276 (TRNAR) is RNA binding; important for wobble base 34 recognition. Residues cysteine 305, cysteine 307, cysteine 310, and histidine 337 each contribute to the Zn(2+) site.

This sequence belongs to the queuine tRNA-ribosyltransferase family. In terms of assembly, homodimer. Within each dimer, one monomer is responsible for RNA recognition and catalysis, while the other monomer binds to the replacement base PreQ1. Requires Zn(2+) as cofactor.

The catalysed reaction is 7-aminomethyl-7-carbaguanine + guanosine(34) in tRNA = 7-aminomethyl-7-carbaguanosine(34) in tRNA + guanine. Its pathway is tRNA modification; tRNA-queuosine biosynthesis. Its function is as follows. Catalyzes the base-exchange of a guanine (G) residue with the queuine precursor 7-aminomethyl-7-deazaguanine (PreQ1) at position 34 (anticodon wobble position) in tRNAs with GU(N) anticodons (tRNA-Asp, -Asn, -His and -Tyr). Catalysis occurs through a double-displacement mechanism. The nucleophile active site attacks the C1' of nucleotide 34 to detach the guanine base from the RNA, forming a covalent enzyme-RNA intermediate. The proton acceptor active site deprotonates the incoming PreQ1, allowing a nucleophilic attack on the C1' of the ribose to form the product. After dissociation, two additional enzymatic reactions on the tRNA convert PreQ1 to queuine (Q), resulting in the hypermodified nucleoside queuosine (7-(((4,5-cis-dihydroxy-2-cyclopenten-1-yl)amino)methyl)-7-deazaguanosine). This chain is Queuine tRNA-ribosyltransferase, found in Xanthomonas euvesicatoria pv. vesicatoria (strain 85-10) (Xanthomonas campestris pv. vesicatoria).